Here is a 107-residue protein sequence, read N- to C-terminus: Nucleoid-associated protein RC1_2305 (107 aa).

Belongs to the YbaB/EbfC family. As to quaternary structure, homodimer.

Its subcellular location is the cytoplasm. It is found in the nucleoid. Functionally, binds to DNA and alters its conformation. May be involved in regulation of gene expression, nucleoid organization and DNA protection. This is Nucleoid-associated protein RC1_2305 from Rhodospirillum centenum (strain ATCC 51521 / SW).